Here is a 172-residue protein sequence, read N- to C-terminus: Dual-action ribosomal maturation protein DarP (172 aa).

It belongs to the DarP family.

The protein resides in the cytoplasm. In terms of biological role, member of a network of 50S ribosomal subunit biogenesis factors which assembles along the 30S-50S interface, preventing incorrect 23S rRNA structures from forming. Promotes peptidyl transferase center (PTC) maturation. The polypeptide is Dual-action ribosomal maturation protein DarP (Azotobacter vinelandii (strain DJ / ATCC BAA-1303)).